The chain runs to 165 residues: MSGTHKKLGARHKARKRAVDFLFEAEARDLDPVALASERSDLSVKDDAVAPVAAYTVTLVSGVAENLDRIDQVISSHLQDWTLERLPAVDRAILRIAVWELFHATDVPPVVAVDEAVELAKQLSTDDSPGFVNGILGQVVLVAPQVRSAAAATSQRAQESDSGTE.

This sequence belongs to the NusB family.

Functionally, involved in transcription antitermination. Required for transcription of ribosomal RNA (rRNA) genes. Binds specifically to the boxA antiterminator sequence of the ribosomal RNA (rrn) operons. The sequence is that of Transcription antitermination protein NusB from Rhodococcus erythropolis (strain PR4 / NBRC 100887).